We begin with the raw amino-acid sequence, 412 residues long: NADH-quinone oxidoreductase subunit D (412 aa).

Belongs to the complex I 49 kDa subunit family. As to quaternary structure, NDH-1 is composed of 14 different subunits. Subunits NuoB, C, D, E, F, and G constitute the peripheral sector of the complex.

Its subcellular location is the cell inner membrane. The enzyme catalyses a quinone + NADH + 5 H(+)(in) = a quinol + NAD(+) + 4 H(+)(out). NDH-1 shuttles electrons from NADH, via FMN and iron-sulfur (Fe-S) centers, to quinones in the respiratory chain. The immediate electron acceptor for the enzyme in this species is believed to be a menaquinone. Couples the redox reaction to proton translocation (for every two electrons transferred, four hydrogen ions are translocated across the cytoplasmic membrane), and thus conserves the redox energy in a proton gradient. This is NADH-quinone oxidoreductase subunit D from Flavobacterium johnsoniae (strain ATCC 17061 / DSM 2064 / JCM 8514 / BCRC 14874 / CCUG 350202 / NBRC 14942 / NCIMB 11054 / UW101) (Cytophaga johnsonae).